Reading from the N-terminus, the 181-residue chain is Probable pyruvoyl-dependent arginine decarboxylase (181 aa).

A Pyruvic acid (Ser) modification is found at Ser43.

The protein belongs to the PdaD family. The cofactor is pyruvate.

The catalysed reaction is L-arginine + H(+) = agmatine + CO2. The polypeptide is Probable pyruvoyl-dependent arginine decarboxylase (Chlorobium luteolum (strain DSM 273 / BCRC 81028 / 2530) (Pelodictyon luteolum)).